The sequence spans 265 residues: Palmitoyltransferase ZDHHC21 (265 aa).

Topologically, residues 1–16 are cytoplasmic; it reads MGLRIHFVVDPHGWCC. A helical membrane pass occupies residues 17–37; the sequence is MGLIVFVWLYNIVIIPKIVLF. Over 38 to 44 the chain is Extracellular; sequence PHYEEGH. A helical membrane pass occupies residues 45–65; it reads IPGILIIIFYGISIFCLVALV. Over 66 to 133 the chain is Cytoplasmic; that stretch reads RASLTDPGRL…NNCVGEDNHW (68 aa). Positions 90–140 constitute a DHHC domain; that stretch reads ELCNKCNLMRPKRSHHCSRCGHCVRRMDHHCPWINNCVGEDNHWLFLQLCF. Cys-120 acts as the S-palmitoyl cysteine intermediate in catalysis. The helical transmembrane segment at 134–154 threads the bilayer; sequence LFLQLCFYTELLTCYALMFSF. Residues 155 to 185 lie on the Extracellular side of the membrane; that stretch reads CHYYYFLPLKKRNLDLFVVRHELAIMRLAAF. A helical transmembrane segment spans residues 186-206; sequence MGITMLVGITGLFYTQLIGII. Residues 207–265 are Cytoplasmic-facing; sequence TDTTSIEKMSNCCEEISRPRKPWQQTFSEVFGTRWKILWFIPFRQRQPLRVPYHFANHV.

The protein belongs to the DHHC palmitoyltransferase family. In terms of tissue distribution, widely expressed. Expressed in Henle's layer within the hair bulb and the hair shaft cuticle (at protein level). Expression is limited to the post-mitotic lineages of inner root sheath (IRS) and cuticle.

The protein resides in the golgi apparatus membrane. Its subcellular location is the golgi apparatus. It is found in the cis-Golgi network membrane. It localises to the cell membrane. It catalyses the reaction L-cysteinyl-[protein] + hexadecanoyl-CoA = S-hexadecanoyl-L-cysteinyl-[protein] + CoA. Functionally, palmitoyltransferase that catalyzes the addition of palmitate onto various protein substrates. Palmitoylates sex steroid hormone receptors, including ESR1, PGR and AR, thereby regulating their targeting to the plasma membrane. This affects rapid intracellular signaling by sex hormones via ERK and AKT kinases and the generation of cAMP, but does not affect that mediated by their nuclear receptor. Palmitoylates FYN, regulates its localization in hair follicles and plays a key role in epidermal homeostasis and hair follicle differentiation. Through the palmitoylation of PLCB1 and the regulation of PLCB1 downstream signaling may indirectly regulate the function of the endothelial barrier and the adhesion of leukocytes to the endothelium. Also has a palmitoyltransferase activity toward ADRA1D, positively regulating its activity and expression and may thereby play a role in vascular contraction. May also palmitoylate eNOS and LCK. This chain is Palmitoyltransferase ZDHHC21, found in Mus musculus (Mouse).